Consider the following 212-residue polypeptide: Peptide methionine sulfoxide reductase MsrA (212 aa).

Residues 1–14 (MSSIDKTQRITQSD) are compositionally biased toward polar residues. Residues 1 to 21 (MSSIDKTQRITQSDALPGRST) form a disordered region. Residue Cys52 is part of the active site.

It belongs to the MsrA Met sulfoxide reductase family.

It carries out the reaction L-methionyl-[protein] + [thioredoxin]-disulfide + H2O = L-methionyl-(S)-S-oxide-[protein] + [thioredoxin]-dithiol. The enzyme catalyses [thioredoxin]-disulfide + L-methionine + H2O = L-methionine (S)-S-oxide + [thioredoxin]-dithiol. In terms of biological role, has an important function as a repair enzyme for proteins that have been inactivated by oxidation. Catalyzes the reversible oxidation-reduction of methionine sulfoxide in proteins to methionine. This chain is Peptide methionine sulfoxide reductase MsrA, found in Pectobacterium carotovorum subsp. carotovorum (strain PC1).